Reading from the N-terminus, the 510-residue chain is Amidophosphoribosyltransferase (510 aa).

Cys-2 functions as the Nucleophile in the catalytic mechanism. The 238-residue stretch at 2 to 239 folds into the Glutamine amidotransferase type-2 domain; sequence CGILGIALAD…PGEAVIIPKD (238 aa). Residues Asp-373 and Asp-374 each contribute to the Mg(2+) site.

It in the C-terminal section; belongs to the purine/pyrimidine phosphoribosyltransferase family. Mg(2+) is required as a cofactor.

It carries out the reaction 5-phospho-beta-D-ribosylamine + L-glutamate + diphosphate = 5-phospho-alpha-D-ribose 1-diphosphate + L-glutamine + H2O. The protein operates within purine metabolism; IMP biosynthesis via de novo pathway; N(1)-(5-phospho-D-ribosyl)glycinamide from 5-phospho-alpha-D-ribose 1-diphosphate: step 1/2. In Lachancea kluyveri (Yeast), this protein is Amidophosphoribosyltransferase (ADE4).